The primary structure comprises 445 residues: C-terminal-binding protein 2 (445 aa).

Arginine 22 carries the post-translational modification Asymmetric dimethylarginine. NAD(+) is bound by residues serine 106, 186 to 191, aspartate 210, 243 to 249, 270 to 272, and aspartate 296; these read IGFGRT, CNLNEHN, and AAR. Arginine 272 is a catalytic residue. The active site involves glutamate 301. The active-site Proton donor is histidine 321. 321-324 is an NAD(+) binding site; it reads HTAW. Residues 414–445 are disordered; it reads THNLPTVAHPSQAPSPNQPTKHGDNREHPNEQ. Serine 428 is modified (phosphoserine; by HIPK2). Over residues 434 to 445 the composition is skewed to basic and acidic residues; it reads KHGDNREHPNEQ.

Belongs to the D-isomer specific 2-hydroxyacid dehydrogenase family. As to quaternary structure, interacts with HIPK2 and PNN. Interacts with the transcription factors ZNF217, BKLF, delta EF1/AREB6/ZEB, EVI-1 and Friend of GATA (FOG) via the consensus motif P-X-[DNS]-L-[STVA]. Also interacts with the C-terminus of adenovirus E1A protein. Can form a complex with BKLF on a CACCC-box oligonucleotide. Can form homodimers or heterodimers of CTBP1 and CTBP2. Interacts with NRIP1 and WIZ. Interacts with PRDM16; represses white adipose tissue (WAT)-specific genes expression. Interacts with MCRIP1. Phosphorylation by HIPK2 on Ser-428 induces proteasomal degradation. As to expression, found in all tissues except spleen and liver.

It is found in the nucleus. The protein localises to the synapse. Its function is as follows. Corepressor targeting diverse transcription regulators. Isoform 2 probably acts as a scaffold for specialized synapses. Functions in brown adipose tissue (BAT) differentiation. This Mus musculus (Mouse) protein is C-terminal-binding protein 2 (Ctbp2).